Reading from the N-terminus, the 445-residue chain is MATTAAASPPAIATALSALLRRQRRRSSRCVGASHARCLAADANAEAVAPSRRGGHGGTRLEEAVPAGEGRSRIDAWISARLGGGGVSRARIQASIRAGLVVVNGRPVSKVSHMVKGGDIVSCTVLELQPLRAEPEDIPLDIVYEDDHLLVVNKPAHMVVHPAPGNANGTLVNAILHHCKISTFTCLARNSIDDECPDSSDDDIDVFDIDQFTTGEVSSEVREALVRPGIVHRLDKGTSGLLVVAKDEHSHAQLAEQFKLHTIRRVYISLTCGAPNPNSGRIEVPIARDPNNRIRMIATPGSGHRYARHAASRYKVREVFAGGGSALVEWRLETGRTHQIRAHAKYLGIPLLGDETYGGTKSMALSLLRPRTPSRYHCDLSNMISKIDRPCLHAALLGFKHPHSGKILEFSCPPPDDFTEVLNELHQVTLASNGNSGGGVARICD.

The transit peptide at 1 to 44 directs the protein to the chloroplast; it reads MATTAAASPPAIATALSALLRRQRRRSSRCVGASHARCLAADAN. Residues 47 to 66 are disordered; that stretch reads AVAPSRRGGHGGTRLEEAVP. The S4 RNA-binding domain maps to 72–147; sequence SRIDAWISAR…IPLDIVYEDD (76 aa). D235 is an active-site residue.

Belongs to the pseudouridine synthase RluA family.

It is found in the plastid. The protein resides in the chloroplast. It carries out the reaction a uridine in RNA = a pseudouridine in RNA. The chain is RNA pseudouridine synthase 2, chloroplastic from Oryza sativa subsp. japonica (Rice).